The chain runs to 443 residues: Fatty acid desaturase 3 (443 aa).

Over 1-130 (MGGVGEPDWE…EDMKLFEAKP (130 aa)) the chain is Cytoplasmic. The Cytochrome b5 heme-binding domain maps to 18-95 (LPTLRWEQVR…LQPLLIGELA (78 aa)). A helical membrane pass occupies residues 131–151 (AFFGLLLGHILAMEVLAWLMI). Position 152 (tyrosine 152) is a topological domain, lumenal. A helical membrane pass occupies residues 153 to 173 (MLGPGWVPSTLAALILAISQA). At 174-259 (QSWCLQHDLG…KKKRRYLPYN (86 aa)) the chain is on the cytoplasmic side. Positions 180–184 (HDLGH) match the Histidine box-1 motif. The short motif at 217-221 (HFQHH) is the Histidine box-2 element. The chain crosses the membrane as a helical span at residues 260–280 (HQHLYFFLIGPPLLTLVNFEV). Topologically, residues 281 to 282 (EN) are lumenal. The helical transmembrane segment at 283–303 (LAYMLVCMQWMDLLWAASFYA) threads the bilayer. Arginine 304 is a topological domain (cytoplasmic). Residues 305-325 (FLLSYIPFYGIPGALLLFVAV) traverse the membrane as a helical segment. At 326-443 (RVLESHWFVW…NVWLEAYLHQ (118 aa)) the chain is on the lumenal side. Residues 381-385 (QIEHH) carry the Histidine box-3 motif.

The protein belongs to the fatty acid desaturase type 1 family.

It localises to the endoplasmic reticulum membrane. The enzyme catalyses an N-acylsphing-4-enine + 2 Fe(II)-[cytochrome b5] + O2 + 2 H(+) = an N-acyl-sphinga-4E,14Z-dienine + 2 Fe(III)-[cytochrome b5] + 2 H2O. It carries out the reaction N-(hexanoyl)sphing-4-enine + 2 Fe(II)-[cytochrome b5] + O2 + 2 H(+) = N-hexanoyl-sphinga-4E,14Z-dienine + 2 Fe(III)-[cytochrome b5] + 2 H2O. The catalysed reaction is sphing-4-enine + 2 Fe(II)-[cytochrome b5] + O2 + 2 H(+) = sphinga-4E,14Z-dienine + 2 Fe(III)-[cytochrome b5] + 2 H2O. It catalyses the reaction (11E)-octadecenoyl-CoA + 2 Fe(II)-[cytochrome b5] + O2 + 2 H(+) = (11E,13Z)-octadecadienoyl-CoA + 2 Fe(III)-[cytochrome b5] + 2 H2O. The enzyme catalyses N-acyl-1-deoxysphinganine + 2 Fe(II)-[cytochrome b5] + O2 + 2 H(+) = N-acyl-1-deoxysphing-14Z-enine + 2 Fe(III)-[cytochrome b5] + 2 H2O. It carries out the reaction an N-acylsphinganine + 2 Fe(II)-[cytochrome b5] + O2 + 2 H(+) = an N-acylsphing-14Z-enine + 2 Fe(III)-[cytochrome b5] + 2 H2O. The protein operates within lipid metabolism; polyunsaturated fatty acid biosynthesis. It functions in the pathway lipid metabolism; sphingolipid metabolism. Mammals have different sphingoid bases that differ in their length and/or pattern of desaturation and hydroxyl groups. The predominant sphingoid base that comprises mammalian ceramides is sphing-4-enine (sphingosine or SPH) which has a trans (E) desaturation at carbon 4. FADS3 is a desaturase that introduces a cis (Z) double bond between carbon 14 and carbon 15 of the sphingoid base (also known as long chain base, LCB), producing LCBs such as sphinga-4,14-dienine (SPD, d18:2(4E,14Z)) from SPH. Prefers SPH-containing ceramides (N-acylsphing-4-enines) as substrates. Capable of metabolizing also the SPH in its free form. SPD ceramides occur widely in mammalian tissues and cells. Due to their unusual structure containing a cis double bond, SPD ceramides may have an opposite, negative role in lipid microdomain formation relative to conventional ceramides. Could be involved in the detoxification of 1-deoxy sphingolipids, by desaturating the cytotoxic 1-deoxysphinganine (1-deoxySA, m18:0), produced under pathological conditions, to 1-deoxysphingenine (1-deoxysphingosine, 1-deoxySO, m18:1). Although prefers SPH-containing ceramides (N-acylsphing-4-enines) as substrates, it also exhibits activity toward dihydrosphingosine-containing CERs (N-acylsphinganines) and produces 14Z-SPH-containing sphingolipids. Its desaturase mechanism involves an electron transfer facilitated by cytochrome b5. FADS3 also acts as a methyl-end fatty acyl coenzyme A (CoA) desaturase that introduces a cis double bond between the preexisting double bond and the terminal methyl group of the fatty acyl chain. Desaturates (11E)-octadecenoate (trans-vaccenoate, the predominant trans fatty acid in human milk) at carbon 13 to generate (11E,13Z)-octadecadienoate (also known as conjugated linoleic acid 11E,13Z-CLA). The polypeptide is Fatty acid desaturase 3 (Bos taurus (Bovine)).